The chain runs to 433 residues: Trigger factor (433 aa).

The PPIase FKBP-type domain occupies 161–246; it reads DSRVTIDFIG…LHKVEAQELP (86 aa).

It belongs to the FKBP-type PPIase family. Tig subfamily.

Its subcellular location is the cytoplasm. The enzyme catalyses [protein]-peptidylproline (omega=180) = [protein]-peptidylproline (omega=0). In terms of biological role, involved in protein export. Acts as a chaperone by maintaining the newly synthesized protein in an open conformation. Functions as a peptidyl-prolyl cis-trans isomerase. The polypeptide is Trigger factor (Photobacterium profundum (strain SS9)).